Reading from the N-terminus, the 986-residue chain is Ephrin type-A receptor 4-A (986 aa).

The N-terminal stretch at 1–20 (MAGIVHGILFCGLFGLCWAV) is a signal peptide. The Extracellular portion of the chain corresponds to 21 to 547 (TGSRIYPASE…MIGEGASPTV (527 aa)). The region spanning 30-209 (EVTLLDSRSV…FYKKCPLTVR (180 aa)) is the Eph LBD domain. Fibronectin type-III domains lie at 328–438 (PPSA…TNQA) and 439–536 (APST…TVPS). N-linked (GlcNAc...) asparagine glycans are attached at residues Asn-340 and Asn-407. Residues 548–569 (LLVSVAGSIVLVVILIAAFVIS) traverse the membrane as a helical segment. Residues 570–986 (RRRSKYSKAK…QQIQGRMVPV (417 aa)) are Cytoplasmic-facing. A phosphotyrosine; by autocatalysis mark is found at Tyr-595 and Tyr-601. The 262-residue stretch at 620–881 (IKIEKVIGVG…QIVSMLDKLI (262 aa)) folds into the Protein kinase domain. Residues 626-634 (IGVGEFGEV) and Lys-652 each bind ATP. Residue Asp-745 is the Proton acceptor of the active site. Phosphotyrosine; by autocatalysis occurs at positions 778 and 928. The region spanning 911 to 975 (SQVASVLDWL…LSSVQGMRTQ (65 aa)) is the SAM domain. The short motif at 984 to 986 (VPV) is the PDZ-binding element.

This sequence belongs to the protein kinase superfamily. Tyr protein kinase family. Ephrin receptor subfamily.

It is found in the cell membrane. Its subcellular location is the early endosome. The catalysed reaction is L-tyrosyl-[protein] + ATP = O-phospho-L-tyrosyl-[protein] + ADP + H(+). Its function is as follows. Receptor tyrosine kinase which binds membrane-bound ephrin family ligands residing on adjacent cells, leading to contact-dependent bidirectional signaling into neighboring cells. The signaling pathway downstream of the receptor is referred to as forward signaling while the signaling pathway downstream of the ephrin ligand is referred to as reverse signaling. Highly promiscuous, it has the unique property among Eph receptors to bind and to be physiologically activated by both GPI-anchored ephrin-A and transmembrane ephrin-B ligands including EFNA1 and EFNB3. Upon activation by ephrin ligands, modulates cell morphology and integrin-dependent cell adhesion through regulation of the Rac, Rap and Rho GTPases activity. Plays an important role in the development of the nervous system controlling different steps of axonal guidance including the establishment of the corticospinal projections. The sequence is that of Ephrin type-A receptor 4-A (epha4-a) from Xenopus laevis (African clawed frog).